A 365-amino-acid chain; its full sequence is Uroporphyrinogen decarboxylase (365 aa).

Residues 27–31, Asp77, Tyr154, Thr209, and His327 each bind substrate; that span reads RQAGR.

The protein belongs to the uroporphyrinogen decarboxylase family. As to quaternary structure, homodimer.

It is found in the cytoplasm. It carries out the reaction uroporphyrinogen III + 4 H(+) = coproporphyrinogen III + 4 CO2. It participates in porphyrin-containing compound metabolism; protoporphyrin-IX biosynthesis; coproporphyrinogen-III from 5-aminolevulinate: step 4/4. Catalyzes the decarboxylation of four acetate groups of uroporphyrinogen-III to yield coproporphyrinogen-III. In Nitrosospira multiformis (strain ATCC 25196 / NCIMB 11849 / C 71), this protein is Uroporphyrinogen decarboxylase.